Consider the following 149-residue polypeptide: Large ribosomal subunit protein bL9 (149 aa).

The protein belongs to the bacterial ribosomal protein bL9 family.

In terms of biological role, binds to the 23S rRNA. The polypeptide is Large ribosomal subunit protein bL9 (Cutibacterium acnes (strain DSM 16379 / KPA171202) (Propionibacterium acnes)).